Consider the following 20-residue polypeptide: Antimicrobial peptide AJN-10 (20 aa).

It localises to the secreted. Its function is as follows. Displays antimicrobial activity against the Gram-negative bacterium A.hydrophila. The protein is Antimicrobial peptide AJN-10 of Anguilla japonica (Japanese eel).